The sequence spans 391 residues: Ferrochelatase (391 aa).

Fe cation-binding residues include histidine 196 and glutamate 281.

It belongs to the ferrochelatase family.

The protein localises to the cytoplasm. The catalysed reaction is heme b + 2 H(+) = protoporphyrin IX + Fe(2+). The protein operates within porphyrin-containing compound metabolism; protoheme biosynthesis; protoheme from protoporphyrin-IX: step 1/1. Catalyzes the ferrous insertion into protoporphyrin IX. This is Ferrochelatase from Synechococcus sp. (strain WH7803).